We begin with the raw amino-acid sequence, 279 residues long: Bis(5'-nucleosyl)-tetraphosphatase, symmetrical (279 aa).

Belongs to the Ap4A hydrolase family.

It carries out the reaction P(1),P(4)-bis(5'-adenosyl) tetraphosphate + H2O = 2 ADP + 2 H(+). Functionally, hydrolyzes diadenosine 5',5'''-P1,P4-tetraphosphate to yield ADP. The chain is Bis(5'-nucleosyl)-tetraphosphatase, symmetrical from Edwardsiella ictaluri (strain 93-146).